The sequence spans 107 residues: UPF0145 protein LVIS_1527 (107 aa).

This sequence belongs to the UPF0145 family.

The chain is UPF0145 protein LVIS_1527 from Levilactobacillus brevis (strain ATCC 367 / BCRC 12310 / CIP 105137 / JCM 1170 / LMG 11437 / NCIMB 947 / NCTC 947) (Lactobacillus brevis).